We begin with the raw amino-acid sequence, 558 residues long: Phosphatidylserine lipase ABHD16A (558 aa).

The next 2 helical transmembrane spans lie at 60 to 80 (ILAL…FAFF) and 93 to 113 (VVPF…VACL). Topologically, residues 114-558 (RGIGRWTNPQ…AQNFQMPWHL (445 aa)) are cytoplasmic. In terms of domain architecture, AB hydrolase-1 spans 281-407 (LVICCEGNAG…LVTRTVRQHL (127 aa)). Residues Ser-355, Asp-430, and His-507 each act as charge relay system in the active site.

Belongs to the AB hydrolase superfamily. ABHD16 family.

Its subcellular location is the membrane. The catalysed reaction is 1-heptadecanoyl-2-(5Z,8Z,11Z,14Z-eicosatetraenoyl)-sn-glycero-3-phosphoserine + H2O = 1-heptadecanoyl-sn-glycero-3-phosphoserine + (5Z,8Z,11Z,14Z)-eicosatetraenoate + H(+). It catalyses the reaction 1-hexadecanoyl-2-(9Z-octadecenoyl)-sn-glycero-3-phospho-L-serine + H2O = 1-hexadecanoyl-sn-glycero-3-phospho-L-serine + (9Z)-octadecenoate + H(+). The enzyme catalyses 1-octadecanoyl-2-(9Z,12Z-octadecadienoyl)-sn-glycero-3-phosphoserine + H2O = 1-octadecanoyl-sn-glycero-3-phosphoserine + (9Z,12Z)-octadecadienoate + H(+). It carries out the reaction 1-heptadecanoyl-2-(5Z,8Z,11Z,14Z-eicosatetraenoyl)-sn-glycero-3-phosphocholine + H2O = 1-heptadecanoyl-sn-glycero-3-phosphocholine + (5Z,8Z,11Z,14Z)-eicosatetraenoate + H(+). The catalysed reaction is 1-hexadecanoyl-2-(9Z-octadecenoyl)-sn-glycero-3-phosphoglycerol + H2O = 1-hexadecanoyl-sn-glycero-3-phosphoglycerol + (9Z)-octadecenoate + H(+). It catalyses the reaction 1-hexadecanoyl-2-(9Z-octadecenoyl)-sn-glycero-3-phospho-(1D-myo-inositol) + H2O = 1-hexadecanoyl-sn-glycero-3-phospho-(1D-myo-inositol) + (9Z)-octadecenoate + H(+). The enzyme catalyses 1-heptadecanoyl-2-(5Z,8Z,11Z,14Z-eicosatetraenoyl)-sn-glycero-3-phosphoethanolamine + H2O = 1-heptadecanoyl-sn-glycero-3-phosphoethanolamine + (5Z,8Z,11Z,14Z)-eicosatetraenoate + H(+). It carries out the reaction 1-hexadecanoyl-2-(9Z-octadecenoyl)-sn-glycero-3-phospho-(1'-sn-glycerol) + H2O = 1-hexadecanoyl-sn-glycero-3-phospho-(1'-sn-glycerol) + (9Z)-octadecenoate + H(+). The catalysed reaction is Hydrolyzes glycerol monoesters of long-chain fatty acids.. It catalyses the reaction 1-tetradecanoylglycerol + H2O = tetradecanoate + glycerol + H(+). The enzyme catalyses 2-hexadecanoylglycerol + H2O = glycerol + hexadecanoate + H(+). It carries out the reaction 1-(9Z-octadecenoyl)-glycerol + H2O = glycerol + (9Z)-octadecenoate + H(+). The catalysed reaction is 2-(9Z-octadecenoyl)-glycerol + H2O = glycerol + (9Z)-octadecenoate + H(+). It catalyses the reaction 2-(9Z,12Z-octadecadienoyl)-glycerol + H2O = (9Z,12Z)-octadecadienoate + glycerol + H(+). The enzyme catalyses 1-(5Z,8Z,11Z,14Z-eicosatetraenoyl)-glycerol + H2O = glycerol + (5Z,8Z,11Z,14Z)-eicosatetraenoate + H(+). It carries out the reaction 2-(5Z,8Z,11Z,14Z-eicosatetraenoyl)-glycerol + H2O = glycerol + (5Z,8Z,11Z,14Z)-eicosatetraenoate + H(+). The catalysed reaction is prostaglandin D2-1-glycerol ester + H2O = prostaglandin D2 + glycerol + H(+). It catalyses the reaction 2-glyceryl-15-deoxy-Delta(12,14)-prostaglandin J2 + H2O = 15-deoxy-Delta(12,14)-prostaglandin J2 + glycerol + H(+). The enzyme catalyses 1-(9Z,12Z-octadecadienoyl)-glycerol + H2O = (9Z,12Z)-octadecadienoate + glycerol + H(+). Its activity is regulated as follows. Inhibited by beta-lactone-based lipid inhibitors, such as beta-lactone palmostatin-B. In terms of biological role, phosphatidylserine (PS) lipase that mediates the hydrolysis of phosphatidylserine to generate lysophosphatidylserine (LPS). LPS constitutes a class of signaling lipids that regulates immunological and neurological processes. Has no activity towards diacylglycerol, triacylglycerol or lysophosphatidylserine lipase. Also has monoacylglycerol lipase activity, with preference for 1-(9Z,12Z-octadecadienoyl)-glycerol (1-LG) and 2-glyceryl-15-deoxy-Delta(12,14)-prostaglandin J2 (15d-PGJ(2)-G). The sequence is that of Phosphatidylserine lipase ABHD16A from Homo sapiens (Human).